Here is a 929-residue protein sequence, read N- to C-terminus: MNWNKGGPGTKRGFGFGGFAISAGKKEEAKLPQQSHSAFGAASSSSGFGKSAPPQLPSFYKIGSKRANFDEENAYFEDEEEDSSNVDLPYIPAENSPTRQQFHSKPADSDSDDDPLEAFMAEVEDQAARDMKRLEEKDKERKNVKGIRDDIEEEDDQEAYFRYMAENPTAGVVQEEEEDNLEYDSDGNPIAPSKKIIDPLPPIDHSEIDYPPFEKNFYNEHEEITNLTPQQLIDLRHKLNLRVSGAAPPRPGSSFAHFGFDEQLMHQIRKSEYTQPTPIQCQGVPVALSGRDMIGIAKTGSGKTAAFIWPMLIHIMDQKELEPGDGPIAVIVCPTRELCQQIHAECKRFGKAYNLRSVAVYGGGSMWEQAKALQEGAEIVVCTPGRLIDHVKKKATNLQRVSYLVFDEADRMFDMGFEYQVRSIASHVRPDRQTLLFSATFRKKIEKLARDILIDPIRVVQGDIGEANEDVTQIVEILHSGPSKWNWLTRRLVEFTSSGSVLLFVTKKANAEELASNLKQEGHNLGLLHGDMDQSERNKVISDFKKKDIPVLVATDVAARGLDIPSIKTVINYDVARDIDTHTHRIGRTGRAGEKGVAYTLLTPKDSNFAGDLVRNLEGANQHVSKELLDLAMQNAWFRKSRFKGGKGKKLNIGGGGLGYRERPGLGSENSDRGNNNNVMSNYEAYKPSTGAMGDRLTAMKAAFQSQYKSHFVAASLSNQKAGTSSAGASGWTSAGSLNSVPTNSAQQGHNSPDNPMTSSTKNIPGFNNSGNISSAPVTYPSIGAQGVNNTASGNNSREGIGGGNGKRERYTENRGGSRHSHGDGGNRHGDGGRHGDGYRYPESGSRHTDGHRHGETRHGGSAGRHGESRGANDGRNGESRKEGFNRENKMDPKVDSSRMDKVDSKTDKTPDGFAVPEPPKRKKSRWDS.

The residue at position 5 (Lys-5) is an N6-acetyllysine. An Omega-N-methylarginine modification is found at Arg-12. Disordered regions lie at residues 25–119 (KKEE…LEAF) and 182–203 (EYDSDGNPIAPSKKIIDPLPPI). Over residues 35 to 52 (SHSAFGAASSSSGFGKSA) the composition is skewed to low complexity. Residue Ser-58 is modified to Phosphoserine. Residues 70-84 (DEENAYFEDEEEDSS) show a composition bias toward acidic residues. Ser-96, Ser-104, Ser-109, and Ser-111 each carry phosphoserine. Positions 116-157 (LEAFMAEVEDQAARDMKRLEEKDKERKNVKGIRDDIEEEDDQ) form a coiled coil. Ser-185 carries the post-translational modification Phosphoserine. The short motif at 253-281 (SSFAHFGFDEQLMHQIRKSEYTQPTPIQC) is the Q motif element. The 176-residue stretch at 284–459 (VPVALSGRDM…RDILIDPIRV (176 aa)) folds into the Helicase ATP-binding domain. An ATP-binding site is contributed by 297-304 (AKTGSGKT). The short motif at 407-410 (DEAD) is the DEAD box element. The region spanning 487-632 (WLTRRLVEFT…HVSKELLDLA (146 aa)) is the Helicase C-terminal domain. Disordered regions lie at residues 662-682 (ERPGLGSENSDRGNNNNVMSN) and 723-929 (GTSS…RWDS). Low complexity predominate over residues 723-737 (GTSSAGASGWTSAGS). Composition is skewed to polar residues over residues 738 to 777 (LNSVPTNSAQQGHNSPDNPMTSSTKNIPGFNNSGNISSAP) and 787 to 798 (GVNNTASGNNSR). Positions 739–828 (NSVPTNSAQQ…RHSHGDGGNR (90 aa)) are necessary for interaction with TP53BP2. Residues 821 to 911 (SHGDGGNRHG…KVDSKTDKTP (91 aa)) show a composition bias toward basic and acidic residues. Lys-894 participates in a covalent cross-link: Glycyl lysine isopeptide (Lys-Gly) (interchain with G-Cter in SUMO2).

The protein belongs to the DEAD box helicase family. DDX42 subfamily. In terms of assembly, transient component of the SF3B subcomplex of the 17S U2 SnRNP complex. Interacts (via the C-terminus) with TP53BP2; the interaction is not inhibitied by TP53BP2 ubiquitination and is independent of p53/TP53.

It localises to the cytoplasm. It is found in the nucleus. The catalysed reaction is ATP + H2O = ADP + phosphate + H(+). In terms of biological role, ATP-dependent RNA helicase that binds to partially double-stranded RNAs (dsRNAs) in order to unwind RNA secondary structures. Unwinding is promoted in the presence of single-strand binding proteins. Also mediates RNA duplex formation thereby displacing the single-strand RNA binding protein. ATP and ADP modulate its activity: ATP binding and hydrolysis by DDX42 triggers RNA strand separation, whereas the ADP-bound form of the protein triggers annealing of complementary RNA strands. Required for assembly of the 17S U2 SnRNP complex of the spliceosome, a large ribonucleoprotein complex that removes introns from transcribed pre-mRNAs: DDX42 associates transiently with the SF3B subcomplex of the 17S U2 SnRNP complex and is released after fulfilling its role in the assembly of 17S U2 SnRNP. Involved in the survival of cells by interacting with TP53BP2 and thereby counteracting the apoptosis-stimulating activity of TP53BP2. Relocalizes TP53BP2 to the cytoplasm. The chain is ATP-dependent RNA helicase DDX42 (Ddx42) from Mus musculus (Mouse).